The primary structure comprises 114 residues: UPF0102 protein HPSH_02690 (114 aa).

The protein belongs to the UPF0102 family.

In Helicobacter pylori (strain Shi470), this protein is UPF0102 protein HPSH_02690.